Here is a 196-residue protein sequence, read N- to C-terminus: Probable GTP-binding protein EngB (196 aa).

The EngB-type G domain maps to 22 to 194 (DKKEIAFAGR…LKTIGEILGD (173 aa)). GTP is bound by residues 30–37 (GRSNVGKS), 56–60 (GKTRS), 74–77 (DLPG), 141–144 (TKSD), and 173–175 (FSS). 2 residues coordinate Mg(2+): S37 and T58.

The protein belongs to the TRAFAC class TrmE-Era-EngA-EngB-Septin-like GTPase superfamily. EngB GTPase family. Mg(2+) is required as a cofactor.

In terms of biological role, necessary for normal cell division and for the maintenance of normal septation. This Petrotoga mobilis (strain DSM 10674 / SJ95) protein is Probable GTP-binding protein EngB.